The following is a 330-amino-acid chain: Low affinity immunoglobulin gamma Fc region receptor II (330 aa).

An N-terminal signal peptide occupies residues 1 to 29; sequence MESNWTVHVFSRTLCHMLLWTAVLNLAAG. At 30–210 the chain is on the extracellular side; it reads THDLPKAVVK…QGPKSSRSLP (181 aa). Ig-like C2-type domains lie at 50-106 and 131-189; these read EDTV…QTRL and GETI…LGRT. 2 cysteine pairs are disulfide-bonded: Cys57–Cys99 and Cys138–Cys182. Asn65, Asn92, Asn166, and Asn173 each carry an N-linked (GlcNAc...) asparagine glycan. A helical membrane pass occupies residues 211–231; that stretch reads VLTIVAAVTGIAVAAIVIILV. The Cytoplasmic portion of the chain corresponds to 232 to 330; that stretch reads SLVYLKKKQV…ETEHDYQNHI (99 aa). The tract at residues 261–330 is disordered; the sequence is VGEYRQPSGG…ETEHDYQNHI (70 aa). Tyr290 carries the post-translational modification Phosphotyrosine. An ITIM motif motif is present at residues 307-312; sequence ITYSLL. Tyr309 carries the phosphotyrosine; by SRC-type Tyr-kinases modification. Phosphotyrosine is present on Tyr326.

In terms of assembly, interacts with FGR. Interacts with LYN. Post-translationally, glycosylated. When coaggregated to BCR, isoform IIB1 and isoform IIB1' become tyrosine phosphorylated and bind to the SH2 domains of the protein tyrosine phosphatase PTPC1. Phosphorylated by SRC-type Tyr-kinases such as LYN, BLK, FYN and SYK. Widely expressed by cells of hemopoietic origin. The isoforms are differentially expressed. Isoform IIB1 is preferentially expressed by cells of the lymphoid lineage, isoform IIB2 by cells of the myeloid lineage, and isoform IIB3 is released by macrophages and is present in the serum. Isoform IIB1' is expressed in myeloid and lymphoid cell lines, in normal spleen cells, and in resting or LPS-activated B-cells but is not detected in mesenteric lymph node cells.

The protein resides in the cell membrane. It localises to the cytoplasm. Its subcellular location is the cytoskeleton. It is found in the secreted. Receptor for the Fc region of complexed immunoglobulins gamma. Low affinity receptor. Involved in a variety of effector and regulatory functions such as phagocytosis of antigen-antibody complexes from the circulation and modulation of antibody production by B-cells. Isoform IIB1 and isoform IIB1' form caps but fail to mediate endocytosis or phagocytosis. Isoform IIB2 can mediate the endocytosis of soluble immune complexes via clathrin-coated pits. Isoform IIB1 and isoform IIB2 can down-regulate B-cell, T-cell, and mast cell activation when coaggregated to B-cell receptors for AG (BCR), T-cell receptors for AG (TCR), and Fc receptors, respectively. This chain is Low affinity immunoglobulin gamma Fc region receptor II (Fcgr2), found in Mus musculus (Mouse).